The sequence spans 366 residues: NAD(P)H-quinone oxidoreductase subunit 1, chloroplastic (366 aa).

7 helical membrane passes run I28 to I48, I105 to L125, L128 to M148, S250 to L270, F271 to I291, I303 to I323, and F346 to L366.

Belongs to the complex I subunit 1 family. As to quaternary structure, NDH is composed of at least 16 different subunits, 5 of which are encoded in the nucleus.

The protein resides in the plastid. It localises to the chloroplast thylakoid membrane. The catalysed reaction is a plastoquinone + NADH + (n+1) H(+)(in) = a plastoquinol + NAD(+) + n H(+)(out). The enzyme catalyses a plastoquinone + NADPH + (n+1) H(+)(in) = a plastoquinol + NADP(+) + n H(+)(out). NDH shuttles electrons from NAD(P)H:plastoquinone, via FMN and iron-sulfur (Fe-S) centers, to quinones in the photosynthetic chain and possibly in a chloroplast respiratory chain. The immediate electron acceptor for the enzyme in this species is believed to be plastoquinone. Couples the redox reaction to proton translocation, and thus conserves the redox energy in a proton gradient. The sequence is that of NAD(P)H-quinone oxidoreductase subunit 1, chloroplastic from Nandina domestica (Heavenly bamboo).